We begin with the raw amino-acid sequence, 398 residues long: Acetyl-CoA acetyltransferase (398 aa).

Serine 2 bears the N-acetylserine mark. The active-site Acyl-thioester intermediate is the cysteine 91. Tyrosine 186 and lysine 231 together coordinate CoA. A K(+)-binding site is contributed by tyrosine 186. The K(+) site is built by alanine 248, alanine 249, and alanine 251. Serine 252 serves as a coordination point for CoA. Valine 350 is a K(+) binding site. Catalysis depends on proton acceptor residues histidine 354 and cysteine 384.

Belongs to the thiolase-like superfamily. Thiolase family. As to quaternary structure, homotetramer.

The protein localises to the cytoplasm. The protein resides in the cytosol. It carries out the reaction 2 acetyl-CoA = acetoacetyl-CoA + CoA. It participates in metabolic intermediate biosynthesis; (R)-mevalonate biosynthesis; (R)-mevalonate from acetyl-CoA: step 1/3. In terms of biological role, acetyl-CoA acetyltransferase; part of the first module of ergosterol biosynthesis pathway that includes the early steps of the pathway, conserved across all eukaryotes, and which results in the formation of mevalonate from acetyl-coenzyme A (acetyl-CoA). ERG10 catalyzes the formation of acetoacetyl-CoA from acetyl-CoA. The first module starts with the action of the cytosolic acetyl-CoA acetyltransferase ERG10 that catalyzes the formation of acetoacetyl-CoA. The hydroxymethylglutaryl-CoA synthase ERG13 then condenses acetyl-CoA with acetoacetyl-CoA to form HMG-CoA. The rate-limiting step of the early module is the reduction to mevalonate by the 3-hydroxy-3-methylglutaryl-coenzyme A (HMG-CoA) reductases HMG1 and HMG2 which are derived from a single ancestral HMGR gene by gene duplication. The protein is Acetyl-CoA acetyltransferase of Saccharomyces cerevisiae (strain ATCC 204508 / S288c) (Baker's yeast).